Here is a 75-residue protein sequence, read N- to C-terminus: U6-lycotoxin-Ls1h (75 aa).

The signal sequence occupies residues 1–21; that stretch reads MKLLLFTALVLVVISLIEVEA. Positions 22-25 are excised as a propeptide; it reads ENER.

It belongs to the neurotoxin 19 (CSTX) family. 06 (U6-Lctx) subfamily. Contains 4 disulfide bonds. As to expression, expressed by the venom gland.

Its subcellular location is the secreted. The protein is U6-lycotoxin-Ls1h of Lycosa singoriensis (Wolf spider).